A 344-amino-acid polypeptide reads, in one-letter code: Dihydroorotate dehydrogenase (quinone) (344 aa).

Residues 65–69 (AGLDK) and Thr89 contribute to the FMN site. Lys69 is a binding site for substrate. 114 to 118 (NRLGF) is a binding site for substrate. FMN contacts are provided by Asn145 and Asn178. A substrate-binding site is contributed by Asn178. Ser181 (nucleophile) is an active-site residue. Asn183 serves as a coordination point for substrate. 2 residues coordinate FMN: Lys223 and Thr251. 252-253 (NT) contributes to the substrate binding site. Residues Gly274, Gly303, and 324–325 (YT) contribute to the FMN site.

It belongs to the dihydroorotate dehydrogenase family. Type 2 subfamily. In terms of assembly, monomer. FMN serves as cofactor.

Its subcellular location is the cell membrane. It catalyses the reaction (S)-dihydroorotate + a quinone = orotate + a quinol. Its pathway is pyrimidine metabolism; UMP biosynthesis via de novo pathway; orotate from (S)-dihydroorotate (quinone route): step 1/1. Functionally, catalyzes the conversion of dihydroorotate to orotate with quinone as electron acceptor. The sequence is that of Dihydroorotate dehydrogenase (quinone) from Methylibium petroleiphilum (strain ATCC BAA-1232 / LMG 22953 / PM1).